We begin with the raw amino-acid sequence, 100 residues long: Large ribosomal subunit protein bL21 (100 aa).

It belongs to the bacterial ribosomal protein bL21 family. As to quaternary structure, part of the 50S ribosomal subunit. Contacts protein L20.

This protein binds to 23S rRNA in the presence of protein L20. The protein is Large ribosomal subunit protein bL21 of Wolbachia sp. subsp. Brugia malayi (strain TRS).